Consider the following 288-residue polypeptide: Nucleotide-binding protein Mlg_2233 (288 aa).

11–18 (GLSGSGKS) lines the ATP pocket. 63-66 (DARN) contacts GTP.

The protein belongs to the RapZ-like family.

In terms of biological role, displays ATPase and GTPase activities. The chain is Nucleotide-binding protein Mlg_2233 from Alkalilimnicola ehrlichii (strain ATCC BAA-1101 / DSM 17681 / MLHE-1).